The primary structure comprises 220 residues: A-type ATP synthase subunit K (220 aa).

6 consecutive transmembrane segments (helical) span residues 5–25, 63–83, 90–110, 125–145, 155–175, and 195–215; these read LILGAVGAGLAVGIAGLGSGI, FLVAILILFVFKTVSPWAMFA, LAGLSAIGQGIAASAGLGAVA, LPETQAIYGLLIAILLLVGVF, AALGAGFAVGFAGLSGIGQGI, and LVLAVMPETFAIFGLLIAILI.

It belongs to the V-ATPase proteolipid subunit family. In terms of assembly, the A-type ATPase is composed of subunits A(3), B(3), C, D, E(1 or 2), F, H(2), I and K(x). Subunit K dimerizes and may form higher oligomers.

The protein localises to the cell membrane. In terms of biological role, component of the A-type ATP synthase that produces ATP from ADP in the presence of a proton gradient across the membrane. The polypeptide is A-type ATP synthase subunit K (Methanocaldococcus jannaschii (strain ATCC 43067 / DSM 2661 / JAL-1 / JCM 10045 / NBRC 100440) (Methanococcus jannaschii)).